The chain runs to 310 residues: Porphobilinogen deaminase (310 aa).

The residue at position 241 (C241) is an S-(dipyrrolylmethanemethyl)cysteine.

It belongs to the HMBS family. In terms of assembly, monomer. It depends on dipyrromethane as a cofactor.

It carries out the reaction 4 porphobilinogen + H2O = hydroxymethylbilane + 4 NH4(+). The protein operates within porphyrin-containing compound metabolism; protoporphyrin-IX biosynthesis; coproporphyrinogen-III from 5-aminolevulinate: step 2/4. In terms of biological role, tetrapolymerization of the monopyrrole PBG into the hydroxymethylbilane pre-uroporphyrinogen in several discrete steps. The sequence is that of Porphobilinogen deaminase from Lysinibacillus sphaericus (strain C3-41).